The following is a 92-amino-acid chain: Small ribosomal subunit protein uS17 (92 aa).

Belongs to the universal ribosomal protein uS17 family. As to quaternary structure, part of the 30S ribosomal subunit.

One of the primary rRNA binding proteins, it binds specifically to the 5'-end of 16S ribosomal RNA. The sequence is that of Small ribosomal subunit protein uS17 from Bordetella petrii (strain ATCC BAA-461 / DSM 12804 / CCUG 43448).